The following is a 343-amino-acid chain: Sulfate/thiosulfate import ATP-binding protein CysA (343 aa).

Residues 3–237 enclose the ABC transporter domain; the sequence is IRISHLRKQF…PASPFVYSFV (235 aa). Residue 35–42 coordinates ATP; the sequence is GPSGSGKT.

This sequence belongs to the ABC transporter superfamily. Sulfate/tungstate importer (TC 3.A.1.6) family. In terms of assembly, the complex is composed of two ATP-binding proteins (CysA), two transmembrane proteins (CysT and CysW) and a solute-binding protein (CysP).

It localises to the cell inner membrane. The catalysed reaction is sulfate(out) + ATP + H2O = sulfate(in) + ADP + phosphate + H(+). It catalyses the reaction thiosulfate(out) + ATP + H2O = thiosulfate(in) + ADP + phosphate + H(+). Part of the ABC transporter complex CysAWTP involved in sulfate/thiosulfate import. Responsible for energy coupling to the transport system. The polypeptide is Sulfate/thiosulfate import ATP-binding protein CysA (Xanthomonas campestris pv. campestris (strain ATCC 33913 / DSM 3586 / NCPPB 528 / LMG 568 / P 25)).